The chain runs to 655 residues: NAD(P)H-quinone oxidoreductase subunit 5, chloroplastic (655 aa).

The next 16 helical transmembrane spans lie at 7 to 27, 40 to 60, 89 to 109, 124 to 144, 147 to 167, 185 to 205, 226 to 246, 265 to 285, 296 to 316, 334 to 354, 361 to 381, 402 to 422, 434 to 454, 488 to 508, 533 to 553, and 635 to 655; these read YAWLIPILPFLGSMIIGLGLI, FAFFNIVLLGIALIFSISILI, IDPLTSVMLVLVTSVAILVMI, FFAYLSLFTASMLGLVLSPNL, IYVFWELVGMCSYLLIGFWFT, GDFGLFLGILGLYWVTGSFEF, HPVQVELLVLFNLLVFLGPMA, TPISALIHAATMVAAGVFLVA, IVMGFIAWIGAITAIIAAIIA, LGYMIMAMGVGSYTAGLFHLI, ALLFLGSGSVIHGMEPVVGFN, AITFLLGTLSLCGIPPMACFW, AQPILWIIAWVTAGLTSFYMF, ILIPLIILALVTTLVGFVGTP, LSMSGSSVGIALIGLTLASLI, and QSYVFVIIFATLIFVLASQGF.

This sequence belongs to the complex I subunit 5 family. As to quaternary structure, NDH is composed of at least 16 different subunits, 5 of which are encoded in the nucleus.

Its subcellular location is the plastid. The protein localises to the chloroplast thylakoid membrane. It carries out the reaction a plastoquinone + NADH + (n+1) H(+)(in) = a plastoquinol + NAD(+) + n H(+)(out). The catalysed reaction is a plastoquinone + NADPH + (n+1) H(+)(in) = a plastoquinol + NADP(+) + n H(+)(out). Functionally, NDH shuttles electrons from NAD(P)H:plastoquinone, via FMN and iron-sulfur (Fe-S) centers, to quinones in the photosynthetic chain and possibly in a chloroplast respiratory chain. The immediate electron acceptor for the enzyme in this species is believed to be plastoquinone. Couples the redox reaction to proton translocation, and thus conserves the redox energy in a proton gradient. This Chlorokybus atmophyticus (Soil alga) protein is NAD(P)H-quinone oxidoreductase subunit 5, chloroplastic (ndhF).